We begin with the raw amino-acid sequence, 425 residues long: SrfA-induced gene G protein (425 aa).

Residues Asn-25, Asn-28, and Asn-36 are each glycosylated (N-linked (GlcNAc...) asparagine). 3 coiled-coil regions span residues Arg-41–Asn-91, His-172–Thr-208, and Lys-292–Ile-340. Residues Asn-91–Phe-113 form a helical membrane-spanning segment. The segment at Lys-393–Asn-413 is disordered.

Its subcellular location is the membrane. This chain is SrfA-induced gene G protein (sigG), found in Dictyostelium discoideum (Social amoeba).